We begin with the raw amino-acid sequence, 517 residues long: RNA-binding region-containing protein 3 (517 aa).

Residues 1-26 (MAAPEQPLAISRGCTSSSSLSPPRGD) form a disordered region. Phosphoserine is present on S21. An RRM 1 domain is found at 27-102 (RTLLVRHLPA…HTLVVEFAKE (76 aa)). 2 disordered regions span residues 106-130 (VHSP…DDKE) and 213-254 (MPLH…DEDR). At S108 the chain carries Phosphoserine. Over residues 115–130 (SEKKKRSDDPVEDDKE) the composition is skewed to basic and acidic residues. The segment covering 217-230 (APLPPTSPQPPEEP) has biased composition (pro residues). The segment covering 231 to 252 (PLPEEDEELSSEESEYESTDDE) has biased composition (acidic residues). The region spanning 420–503 (CRIYVKNLAK…KPMVVQFARS (84 aa)) is the RRM 2 domain.

Component of the U11/U12 snRNPs that are part of the U12-type spliceosome. Found in a complex with m(7)G-capped U12 snRNA. Interacts with PDCD7.

The protein localises to the nucleus. Its function is as follows. Participates in pre-mRNA U12-dependent splicing, performed by the minor spliceosome which removes U12-type introns. U12-type introns comprises less than 1% of all non-coding sequences. Binds to the 3'-stem-loop of m(7)G-capped U12 snRNA. The polypeptide is RNA-binding region-containing protein 3 (RNPC3) (Pongo abelii (Sumatran orangutan)).